Reading from the N-terminus, the 312-residue chain is DNA-directed RNA polymerase subunit alpha (312 aa).

The interval 1-226 (MIEFEKPNIT…EHLNLFTNLT (226 aa)) is alpha N-terminal domain (alpha-NTD). Positions 243–312 (DDRILERTIE…DLGLGLKNDK (70 aa)) are alpha C-terminal domain (alpha-CTD).

It belongs to the RNA polymerase alpha chain family. Homodimer. The RNAP catalytic core consists of 2 alpha, 1 beta, 1 beta' and 1 omega subunit. When a sigma factor is associated with the core the holoenzyme is formed, which can initiate transcription.

The enzyme catalyses RNA(n) + a ribonucleoside 5'-triphosphate = RNA(n+1) + diphosphate. DNA-dependent RNA polymerase catalyzes the transcription of DNA into RNA using the four ribonucleoside triphosphates as substrates. The chain is DNA-directed RNA polymerase subunit alpha from Streptococcus sanguinis (strain SK36).